The following is a 1401-amino-acid chain: DNA-directed RNA polymerase subunit beta' (1401 aa).

Positions 70, 72, 85, and 88 each coordinate Zn(2+). Mg(2+)-binding residues include Asp460, Asp462, and Asp464. Zn(2+)-binding residues include Cys808, Cys882, Cys889, and Cys892.

Belongs to the RNA polymerase beta' chain family. As to quaternary structure, the RNAP catalytic core consists of 2 alpha, 1 beta, 1 beta' and 1 omega subunit. When a sigma factor is associated with the core the holoenzyme is formed, which can initiate transcription. The cofactor is Mg(2+). Zn(2+) serves as cofactor.

The enzyme catalyses RNA(n) + a ribonucleoside 5'-triphosphate = RNA(n+1) + diphosphate. Its function is as follows. DNA-dependent RNA polymerase catalyzes the transcription of DNA into RNA using the four ribonucleoside triphosphates as substrates. The polypeptide is DNA-directed RNA polymerase subunit beta' (Legionella pneumophila (strain Corby)).